Reading from the N-terminus, the 389-residue chain is D-alanine--D-alanine ligase (389 aa).

Residues 1–12 are compositionally biased toward polar residues; the sequence is MSTENLPQNPEQ. Residues 1–22 form a disordered region; that stretch reads MSTENLPQNPEQSPRRPPRKPR. An ATP-grasp domain is found at 169–379; the sequence is KAVFTSYGLK…YPELVDRLVQ (211 aa). ATP is bound at residue 205–260; the sequence is AGEHGWPLFVKPARAGSSIGITKVDDLAGLDEAIEEARRHDPKILVEAALRGREIE. Mg(2+) is bound by residues Asp333, Glu346, and Asn348.

It belongs to the D-alanine--D-alanine ligase family. It depends on Mg(2+) as a cofactor. Mn(2+) serves as cofactor.

Its subcellular location is the cytoplasm. It catalyses the reaction 2 D-alanine + ATP = D-alanyl-D-alanine + ADP + phosphate + H(+). It participates in cell wall biogenesis; peptidoglycan biosynthesis. In terms of biological role, cell wall formation. The sequence is that of D-alanine--D-alanine ligase (ddl) from Streptomyces coelicolor (strain ATCC BAA-471 / A3(2) / M145).